The primary structure comprises 185 residues: Peptidyl-tRNA hydrolase (185 aa).

Y15 is a tRNA binding site. Residue H20 is the Proton acceptor of the active site. Y64, N66, and N112 together coordinate tRNA.

Belongs to the PTH family. As to quaternary structure, monomer.

The protein localises to the cytoplasm. The enzyme catalyses an N-acyl-L-alpha-aminoacyl-tRNA + H2O = an N-acyl-L-amino acid + a tRNA + H(+). Its function is as follows. Hydrolyzes ribosome-free peptidyl-tRNAs (with 1 or more amino acids incorporated), which drop off the ribosome during protein synthesis, or as a result of ribosome stalling. Functionally, catalyzes the release of premature peptidyl moieties from peptidyl-tRNA molecules trapped in stalled 50S ribosomal subunits, and thus maintains levels of free tRNAs and 50S ribosomes. In Porphyromonas gingivalis (strain ATCC BAA-308 / W83), this protein is Peptidyl-tRNA hydrolase.